The primary structure comprises 277 residues: tRNA pseudouridine synthase A (277 aa).

D51 serves as the catalytic Nucleophile. Y109 contributes to the substrate binding site.

It belongs to the tRNA pseudouridine synthase TruA family. Homodimer.

It catalyses the reaction uridine(38/39/40) in tRNA = pseudouridine(38/39/40) in tRNA. In terms of biological role, formation of pseudouridine at positions 38, 39 and 40 in the anticodon stem and loop of transfer RNAs. In Nitrosomonas eutropha (strain DSM 101675 / C91 / Nm57), this protein is tRNA pseudouridine synthase A.